The chain runs to 70 residues: MKSQTFFLLFLVVFLLAITQSEAIFGAIAGLLKNIFGKRSLRDMDTMKYLYDPSLSAADLKTLQKLMENY.

Residues 1-23 (MKSQTFFLLFLVVFLLAITQSEA) form the signal peptide. Phenylalanine amide is present on Phe36. A propeptide spanning residues 40-70 (SLRDMDTMKYLYDPSLSAADLKTLQKLMENY) is cleaved from the precursor.

The protein belongs to the non-disulfide-bridged peptide (NDBP) superfamily. Short antimicrobial peptide (group 4) family. Expressed by the venom gland.

It localises to the secreted. The protein localises to the target cell membrane. Its function is as follows. Amphipathic peptide that exhibits extensive cytolytic activities against both prokaryotic and eukaryotic cells. Is more potent against Gram-positive bacteria (lethal concentration (LC)=0.25-2.9 uM) than against Gram-negative bacteria (LC=6.2-&gt;50 uM), and fungi ((LC)=14.1-&gt;50 uM). Shows hemolytic activity against rabbit erythrocytes (37.7% of inhibition at 6.25 uM) and cytolysis against rat dorsal root ganglions. In vivo, intravenous injection into mice tail provokes uncomfortable symptoms with a death rate of 12.5%. In Mesobuthus eupeus (Lesser Asian scorpion), this protein is Venom antimicrobial peptide-6.